We begin with the raw amino-acid sequence, 177 residues long: Putative acetyltransferase FG08082 (177 aa).

Residues 81 to 174 (EEWEQVGLVR…VSIAMVEGPG (94 aa)) form the N-acetyltransferase domain.

This sequence belongs to the acetyltransferase family.

It functions in the pathway mycotoxin biosynthesis. Its function is as follows. Putative acetyltransferase; part of the gene cluster that mediates the biosynthesis of butenolide, a mycotoxin that shows antibiotic activity but does not seem to play a major role in the spread of head blight in wheat. Butenolide is derived from glutamic acid via a 4-acetamido-2-butenoic acid intermediate. The predicted function of the NADH:flavin oxidoreductase FG08077, the cytochrome P450 monooxygenase FG08079, the decarboxylase FG08083, and the putative acetyltransferase FG08082 are consistent with this pathway, however, the respective activities of the butelonide biosynthesis cluster enzymes have still to be experimentally determined. The sequence is that of Putative acetyltransferase FG08082 from Gibberella zeae (strain ATCC MYA-4620 / CBS 123657 / FGSC 9075 / NRRL 31084 / PH-1) (Wheat head blight fungus).